We begin with the raw amino-acid sequence, 209 residues long: Large ribosomal subunit protein bL9 (209 aa).

The disordered stretch occupies residues 169–209 (RDGASFTEDYDPNAEPGLATEAEEAVADADDNAETNSEESL). Positions 189-209 (EAEEAVADADDNAETNSEESL) are enriched in acidic residues.

This sequence belongs to the bacterial ribosomal protein bL9 family.

Its function is as follows. Binds to the 23S rRNA. The protein is Large ribosomal subunit protein bL9 of Zymomonas mobilis subsp. mobilis (strain ATCC 31821 / ZM4 / CP4).